The primary structure comprises 226 residues: Small ribosomal subunit protein uS2c (226 aa).

The protein belongs to the universal ribosomal protein uS2 family.

The protein localises to the plastid. The protein resides in the chloroplast. The polypeptide is Small ribosomal subunit protein uS2c (rps2) (Phaeodactylum tricornutum (strain CCAP 1055/1)).